Here is a 112-residue protein sequence, read N- to C-terminus: Putative pterin-4-alpha-carbinolamine dehydratase (112 aa).

This sequence belongs to the pterin-4-alpha-carbinolamine dehydratase family.

The catalysed reaction is (4aS,6R)-4a-hydroxy-L-erythro-5,6,7,8-tetrahydrobiopterin = (6R)-L-erythro-6,7-dihydrobiopterin + H2O. This chain is Putative pterin-4-alpha-carbinolamine dehydratase, found in Shewanella denitrificans (strain OS217 / ATCC BAA-1090 / DSM 15013).